Consider the following 284-residue polypeptide: NAD kinase (284 aa).

Catalysis depends on D70, which acts as the Proton acceptor. Residues 70–71 (DG), 139–140 (NE), K167, D169, L177, 180–185 (TAYNLS), and Q236 each bind NAD(+).

The protein belongs to the NAD kinase family. It depends on a divalent metal cation as a cofactor.

It is found in the cytoplasm. It carries out the reaction NAD(+) + ATP = ADP + NADP(+) + H(+). Involved in the regulation of the intracellular balance of NAD and NADP, and is a key enzyme in the biosynthesis of NADP. Catalyzes specifically the phosphorylation on 2'-hydroxyl of the adenosine moiety of NAD to yield NADP. The chain is NAD kinase from Helicobacter pylori (strain Shi470).